The primary structure comprises 97 residues: Large ribosomal subunit protein bL27 (97 aa).

Residues 1-10 (MVKLNLSNLQ) are compositionally biased toward polar residues. A propeptide spanning residues 1 to 12 (MVKLNLSNLQHF) is cleaved from the precursor. Residues 1-38 (MVKLNLSNLQHFAHKKGGGSTSNGRDSQAKRLGAKAAD) form a disordered region.

It belongs to the bacterial ribosomal protein bL27 family. The N-terminus is cleaved by ribosomal processing cysteine protease Prp.

The chain is Large ribosomal subunit protein bL27 from Streptococcus equi subsp. zooepidemicus (strain H70).